The following is a 264-amino-acid chain: Cancer/testis antigen 55 (264 aa).

The disordered stretch occupies residues 242–264; the sequence is SSSGFQDDGGLGRPKRERRSQSI. The segment covering 254–264 has biased composition (basic residues); the sequence is RPKRERRSQSI.

As to quaternary structure, interacts with GABARAP; this interaction may be important for GABARAP protein stability. Isoform 1 interacts with LAMP2; this interaction may be important for LAMP2 protein stability. In terms of tissue distribution, testis-specific. Expressed in spermatozoa (at protein level).

It localises to the cytoplasm. It is found in the cytoplasmic vesicle. The protein localises to the secretory vesicle. Its subcellular location is the acrosome. The protein resides in the cell projection. It localises to the cilium. It is found in the flagellum. Functionally, plays a role in spermatogenesis, possibly acting in the regulation of the autophagy pathway. In Homo sapiens (Human), this protein is Cancer/testis antigen 55 (CT55).